Reading from the N-terminus, the 1017-residue chain is A-type ATP synthase subunit A (1017 aa).

In terms of domain architecture, DOD-type homing endonuclease spans 396–529 (FLGYLIADGT…FSYLLAKLGI (134 aa)).

It belongs to the ATPase alpha/beta chains family. Has multiple subunits with at least A(3), B(3), C, D, E, F, H, I and proteolipid K(x). Post-translationally, this protein undergoes a protein self splicing that involves a post-translational excision of the VDE intervening region (intein) followed by peptide ligation.

The protein localises to the cell membrane. The catalysed reaction is ATP + H2O + 4 H(+)(in) = ADP + phosphate + 5 H(+)(out). In terms of biological role, component of the A-type ATP synthase that produces ATP from ADP in the presence of a proton gradient across the membrane. The A chain is the catalytic subunit. The polypeptide is A-type ATP synthase subunit A (Pyrococcus abyssi (strain GE5 / Orsay)).